The following is an 876-amino-acid chain: Alanine--tRNA ligase (876 aa).

Zn(2+) is bound by residues His-568, His-572, Cys-670, and His-674.

The protein belongs to the class-II aminoacyl-tRNA synthetase family. Zn(2+) serves as cofactor.

The protein localises to the cytoplasm. The catalysed reaction is tRNA(Ala) + L-alanine + ATP = L-alanyl-tRNA(Ala) + AMP + diphosphate. Its function is as follows. Catalyzes the attachment of alanine to tRNA(Ala) in a two-step reaction: alanine is first activated by ATP to form Ala-AMP and then transferred to the acceptor end of tRNA(Ala). Also edits incorrectly charged Ser-tRNA(Ala) and Gly-tRNA(Ala) via its editing domain. The polypeptide is Alanine--tRNA ligase (Geobacter metallireducens (strain ATCC 53774 / DSM 7210 / GS-15)).